Reading from the N-terminus, the 94-residue chain is Large ribosomal subunit protein uL23 (94 aa).

It belongs to the universal ribosomal protein uL23 family. In terms of assembly, part of the 50S ribosomal subunit. Contacts protein L29, and trigger factor when it is bound to the ribosome.

One of the early assembly proteins it binds 23S rRNA. One of the proteins that surrounds the polypeptide exit tunnel on the outside of the ribosome. Forms the main docking site for trigger factor binding to the ribosome. This chain is Large ribosomal subunit protein uL23, found in Phytoplasma australiense.